Reading from the N-terminus, the 385-residue chain is Serine/threonine-protein kinase H2 (385 aa).

The Protein kinase domain occupies 63-320; the sequence is YDIKALIGTG…AGQALDHPWV (258 aa). ATP contacts are provided by residues 69–77 and Lys-92; that span reads IGTGSFSRV. A disordered region spans residues 342–367; that stretch reads QRASPHSQSPGSAQSSKSHYSHKSRH. Low complexity predominate over residues 344 to 359; the sequence is ASPHSQSPGSAQSSKS.

Belongs to the protein kinase superfamily. CAMK Ser/Thr protein kinase family.

It carries out the reaction L-seryl-[protein] + ATP = O-phospho-L-seryl-[protein] + ADP + H(+). It catalyses the reaction L-threonyl-[protein] + ATP = O-phospho-L-threonyl-[protein] + ADP + H(+). In Homo sapiens (Human), this protein is Serine/threonine-protein kinase H2 (PSKH2).